A 223-amino-acid polypeptide reads, in one-letter code: DnaJ homolog subfamily B member 9 (223 aa).

Residues 1–23 form the signal peptide; it reads MATPQSIFIFAICILMITELILA. The 65-residue stretch at 26 to 90 folds into the J domain; the sequence is SYYDILGVPK…NRRKEYDTLG (65 aa). Residues 91–223 form a divergent targeting domain region; sequence HSAFTSGKGQ…VTTYTDCSGQ (133 aa). Serine 133 is modified (phosphoserine).

Interacts with HSPA5/BiP; interaction is direct. Interacts with ERN1/IRE1 (via the luminal region). Interacts with DERL1. As to expression, widely expressed. Expressed at highest level in the liver, placenta and kidney.

Its subcellular location is the endoplasmic reticulum lumen. Functionally, co-chaperone for Hsp70 protein HSPA5/BiP that acts as a key repressor of the ERN1/IRE1-mediated unfolded protein response (UPR). J domain-containing co-chaperones stimulate the ATPase activity of Hsp70 proteins and are required for efficient substrate recognition by Hsp70 proteins. In the unstressed endoplasmic reticulum, interacts with the luminal region of ERN1/IRE1 and selectively recruits HSPA5/BiP: HSPA5/BiP disrupts the dimerization of the active ERN1/IRE1 luminal region, thereby inactivating ERN1/IRE1. Also involved in endoplasmic reticulum-associated degradation (ERAD) of misfolded proteins. Required for survival of B-cell progenitors and normal antibody production. This is DnaJ homolog subfamily B member 9 (DNAJB9) from Homo sapiens (Human).